The primary structure comprises 87 residues: Small ribosomal subunit protein uS15 (87 aa).

Belongs to the universal ribosomal protein uS15 family. In terms of assembly, part of the 30S ribosomal subunit. Forms a bridge to the 50S subunit in the 70S ribosome, contacting the 23S rRNA.

In terms of biological role, one of the primary rRNA binding proteins, it binds directly to 16S rRNA where it helps nucleate assembly of the platform of the 30S subunit by binding and bridging several RNA helices of the 16S rRNA. Its function is as follows. Forms an intersubunit bridge (bridge B4) with the 23S rRNA of the 50S subunit in the ribosome. This Pseudothermotoga lettingae (strain ATCC BAA-301 / DSM 14385 / NBRC 107922 / TMO) (Thermotoga lettingae) protein is Small ribosomal subunit protein uS15.